The following is a 194-amino-acid chain: Peptidyl-tRNA hydrolase (194 aa).

Y17 serves as a coordination point for tRNA. H22 (proton acceptor) is an active-site residue. TRNA-binding residues include F68, N70, and N116.

Belongs to the PTH family. As to quaternary structure, monomer.

The protein localises to the cytoplasm. The catalysed reaction is an N-acyl-L-alpha-aminoacyl-tRNA + H2O = an N-acyl-L-amino acid + a tRNA + H(+). Hydrolyzes ribosome-free peptidyl-tRNAs (with 1 or more amino acids incorporated), which drop off the ribosome during protein synthesis, or as a result of ribosome stalling. Its function is as follows. Catalyzes the release of premature peptidyl moieties from peptidyl-tRNA molecules trapped in stalled 50S ribosomal subunits, and thus maintains levels of free tRNAs and 50S ribosomes. This Actinobacillus succinogenes (strain ATCC 55618 / DSM 22257 / CCUG 43843 / 130Z) protein is Peptidyl-tRNA hydrolase.